The following is a 431-amino-acid chain: Adenylosuccinate synthetase (431 aa).

GTP contacts are provided by residues 12–18 and 40–42; these read GDEGKGK and GHT. Residue D13 is the Proton acceptor of the active site. 2 residues coordinate Mg(2+): D13 and G40. IMP-binding positions include 13–16, 38–41, T129, R143, Q224, T239, and R303; these read DEGK and NAGH. The Proton donor role is filled by H41. Residue 299–305 coordinates substrate; that stretch reads VTTGRAR. Residues R305, 331–333, and 413–415 each bind GTP; these read KLD and GVG.

Belongs to the adenylosuccinate synthetase family. As to quaternary structure, homodimer. Mg(2+) is required as a cofactor.

It localises to the cytoplasm. It catalyses the reaction IMP + L-aspartate + GTP = N(6)-(1,2-dicarboxyethyl)-AMP + GDP + phosphate + 2 H(+). It participates in purine metabolism; AMP biosynthesis via de novo pathway; AMP from IMP: step 1/2. Functionally, plays an important role in the de novo pathway of purine nucleotide biosynthesis. Catalyzes the first committed step in the biosynthesis of AMP from IMP. The chain is Adenylosuccinate synthetase from Mycobacterium sp. (strain KMS).